We begin with the raw amino-acid sequence, 1226 residues long: Probable DNA-binding protein SNT1 (1226 aa).

Disordered stretches follow at residues 1–219 (MGYP…YSRS) and 264–331 (LKST…PDNI). Residues 11–27 (GDKKRYHYSNNPNRRHP) show a composition bias toward basic residues. Residues 31–64 (YSKNSFPKSSNNGFVSSPTADNSTNPSVTPSTAS) are compositionally biased toward polar residues. Composition is skewed to low complexity over residues 81–103 (PRPS…SSTR) and 116–131 (SSST…NTST). Composition is skewed to polar residues over residues 132–143 (ITHTNTDIGNSR) and 150–170 (SRYN…SALS). Position 187 is a phosphoserine (S187). Residues 202-211 (NNVSSVNNNS) are compositionally biased toward low complexity. Positions 264 to 275 (LKSTHSQSSPSL) are enriched in polar residues. The segment covering 280–304 (FHDANKLDKPEASVKVETPSKDETK) has biased composition (basic and acidic residues). S395 is subject to Phosphoserine. Residues 539–591 (DLQKKYEKECEILTKLSENLRKEEIENKRKEHELMEQKRREEGIETEKEKSLR) are a coiled coil. The span at 569 to 590 (EHELMEQKRREEGIETEKEKSL) shows a compositional bias: basic and acidic residues. The segment at 569 to 605 (EHELMEQKRREEGIETEKEKSLRHPSSSSSSRRRNRA) is disordered. In terms of domain architecture, SANT spans 668 to 720 (DASDNFTDHEHSLFLEGYLIHPKKFGKISHYMGGLRSPEECVLHYYRTKKTVN). The segment covering 732-745 (RKMSAAAKRRKRKE) has biased composition (basic residues). The tract at residues 732–796 (RKMSAAAKRR…SEVKGDPLGT (65 aa)) is disordered. Residues 748-758 (NDEEVEVDESK) are compositionally biased toward acidic residues. Basic and acidic residues predominate over residues 759–773 (EESTNTIEKEEKSEN). The residue at position 796 (T796) is a Phosphothreonine. In terms of domain architecture, HTH myb-type spans 884 to 938 (APEHKTSYWSVRESQLFPELLKEFGSQWSLISEKLGTKSTTMVRNYYQRNAARNG). Residues 911–934 (WSLISEKLGTKSTTMVRNYYQRNA) constitute a DNA-binding region (H-T-H motif). S1037 carries the phosphoserine modification. The tract at residues 1172–1194 (SQGTPTFPLPAPRTSPISRAPPK) is disordered.

Identified in a Set3C complex with SET3, HST1, HOS2, SIF2, CPR1 and HOS4.

The protein resides in the nucleus. Its function is as follows. Part of the Set3C complex, which is required to repress early/middle sporulation genes during meiosis. The chain is Probable DNA-binding protein SNT1 (SNT1) from Saccharomyces cerevisiae (strain ATCC 204508 / S288c) (Baker's yeast).